The sequence spans 78 residues: Sec-independent protein translocase protein TatA (78 aa).

A helical membrane pass occupies residues 1–21 (MGGISIWQLLIIAVIVVLLFG). Basic and acidic residues predominate over residues 47-59 (ESEKKDADFEPKS). Residues 47-78 (ESEKKDADFEPKSLEQQSKQAATESKKDKEQA) form a disordered region. Residues 60 to 69 (LEQQSKQAAT) show a composition bias toward polar residues.

The protein belongs to the TatA/E family. The Tat system comprises two distinct complexes: a TatABC complex, containing multiple copies of TatA, TatB and TatC subunits, and a separate TatA complex, containing only TatA subunits. Substrates initially bind to the TatABC complex, which probably triggers association of the separate TatA complex to form the active translocon.

The protein resides in the cell inner membrane. Functionally, part of the twin-arginine translocation (Tat) system that transports large folded proteins containing a characteristic twin-arginine motif in their signal peptide across membranes. TatA could form the protein-conducting channel of the Tat system. The protein is Sec-independent protein translocase protein TatA of Vibrio vulnificus (strain CMCP6).